Reading from the N-terminus, the 347-residue chain is Gentisate 1,2 dioxygenase 1 (347 aa).

A Cupin type-2 domain is found at 96-163; it reads LQLILPGEVA…DSDKPMIWMD (68 aa).

It belongs to the gentisate 1,2-dioxygenase family. Homotetramer. The cofactor is Fe(2+).

It carries out the reaction 2,5-dihydroxybenzoate + O2 = 3-maleylpyruvate + H(+). Its activity is regulated as follows. Completely inhibited by the presence of 5 mM Cu(2+). Partially inhibited with 5 mM Mn(2+), Zn(2+) or EDTA. Functionally, involved in the degradation of gentisate. Catalyzes the conversion of gentisate (2,5-dihydroxybenzoate) to maleylpyruvate. Exhibits broad substrate specificities towards alkyl and halogenated gentisates. This Aquipseudomonas alcaligenes (Pseudomonas alcaligenes) protein is Gentisate 1,2 dioxygenase 1.